The chain runs to 427 residues: Gamma-glutamyl phosphate reductase (427 aa).

The protein belongs to the gamma-glutamyl phosphate reductase family.

Its subcellular location is the cytoplasm. The enzyme catalyses L-glutamate 5-semialdehyde + phosphate + NADP(+) = L-glutamyl 5-phosphate + NADPH + H(+). It participates in amino-acid biosynthesis; L-proline biosynthesis; L-glutamate 5-semialdehyde from L-glutamate: step 2/2. Functionally, catalyzes the NADPH-dependent reduction of L-glutamate 5-phosphate into L-glutamate 5-semialdehyde and phosphate. The product spontaneously undergoes cyclization to form 1-pyrroline-5-carboxylate. This Anaeromyxobacter dehalogenans (strain 2CP-1 / ATCC BAA-258) protein is Gamma-glutamyl phosphate reductase.